A 607-amino-acid chain; its full sequence is MNKEERAKRQSKIRNFSIIAHIDHGKSTLADRILEKTNALTQREMKAQLLDSMDLERERGITIKLNAVQLNYKAKDGEEYILHLIDTPGHVDFTYEVSRSLAACEGAILVVDAAQGIEAQTLANVYLALDNNLEILPVINKIDLPSADPERVRQEVEDVIGLDASEAVLASAKAGIGIEEILEQIVEKVPAPTGDSEEPLQCMIFDSLYDPYRGVIAYIRVVNGTVKVGDKVRMMATGKEFEVTEVGVFTPKTTQRDELTVGDVGFLAASIKNVGDTRVGDTITHAKRPAAEPLAGYRKLNPMVFCGLYPIDSARYNDLRDALEKLELNDSALEFEPETSQALGFGFRCGFLGLLHMEIIQERIEREFKIDLITTAPSVIYKVFLTNGEDMIVDNPSNMPNPQTIDRVEEPFVKAAIMVPNDYVGAVMEICQGKRGTFIDMQYLDETRVTLTYEIPLSEIVYDFFDQLKSNTKGYASFDYELIGYKPSKLVKMDILLNSEQVDALSFIVHRDSAYDRGKVIVEKLKELIPRQQFEVPIQATIGNKVVARSTIKAMRKNVLAKCYGGDISRKRKLLDKQKEGKKRMKSVGSVEVPQEAFMAVLKMDDN.

The tr-type G domain maps to 11–193 (SKIRNFSIIA…QIVEKVPAPT (183 aa)). GTP contacts are provided by residues 23 to 28 (DHGKST) and 140 to 143 (NKID).

This sequence belongs to the TRAFAC class translation factor GTPase superfamily. Classic translation factor GTPase family. LepA subfamily.

It localises to the cell membrane. It carries out the reaction GTP + H2O = GDP + phosphate + H(+). Functionally, required for accurate and efficient protein synthesis under certain stress conditions. May act as a fidelity factor of the translation reaction, by catalyzing a one-codon backward translocation of tRNAs on improperly translocated ribosomes. Back-translocation proceeds from a post-translocation (POST) complex to a pre-translocation (PRE) complex, thus giving elongation factor G a second chance to translocate the tRNAs correctly. Binds to ribosomes in a GTP-dependent manner. The protein is Elongation factor 4 of Bacillus cereus (strain Q1).